The following is a 275-amino-acid chain: NH(3)-dependent NAD(+) synthetase (275 aa).

46-53 (GISGGQDS) is a binding site for ATP. Mg(2+) is bound at residue D52. Residue R140 coordinates deamido-NAD(+). T160 is an ATP binding site. Residue E165 participates in Mg(2+) binding. Deamido-NAD(+) contacts are provided by K173 and D180. The ATP site is built by K189 and T211. 260–261 (HK) lines the deamido-NAD(+) pocket.

It belongs to the NAD synthetase family. Homodimer.

The catalysed reaction is deamido-NAD(+) + NH4(+) + ATP = AMP + diphosphate + NAD(+) + H(+). The protein operates within cofactor biosynthesis; NAD(+) biosynthesis; NAD(+) from deamido-NAD(+) (ammonia route): step 1/1. Functionally, catalyzes the ATP-dependent amidation of deamido-NAD to form NAD. Uses ammonia as a nitrogen source. This chain is NH(3)-dependent NAD(+) synthetase, found in Shigella flexneri serotype 5b (strain 8401).